A 105-amino-acid chain; its full sequence is Large ribosomal subunit protein uL24 (105 aa).

The tract at residues 1 to 25 is disordered; the sequence is MHIKKGDNVKVIAGKDKGKEGKVVS.

The protein belongs to the universal ribosomal protein uL24 family. As to quaternary structure, part of the 50S ribosomal subunit.

One of two assembly initiator proteins, it binds directly to the 5'-end of the 23S rRNA, where it nucleates assembly of the 50S subunit. Its function is as follows. One of the proteins that surrounds the polypeptide exit tunnel on the outside of the subunit. This Staphylococcus saprophyticus subsp. saprophyticus (strain ATCC 15305 / DSM 20229 / NCIMB 8711 / NCTC 7292 / S-41) protein is Large ribosomal subunit protein uL24.